A 261-amino-acid chain; its full sequence is 5'-nucleotidase SurE (261 aa).

4 residues coordinate a divalent metal cation: aspartate 8, aspartate 9, serine 40, and asparagine 94.

It belongs to the SurE nucleotidase family. The cofactor is a divalent metal cation.

Its subcellular location is the cytoplasm. It carries out the reaction a ribonucleoside 5'-phosphate + H2O = a ribonucleoside + phosphate. In terms of biological role, nucleotidase that shows phosphatase activity on nucleoside 5'-monophosphates. The protein is 5'-nucleotidase SurE of Anaplasma marginale (strain St. Maries).